Reading from the N-terminus, the 315-residue chain is Ribosomal RNA small subunit methyltransferase H (315 aa).

S-adenosyl-L-methionine contacts are provided by residues 61–63, Asp80, Phe108, Asp124, and Gln131; that span reads GGH. A disordered region spans residues 291 to 315; the sequence is PQPEEEEKNPRSRSAKLRFAQRKPL. The span at 301-315 shows a compositional bias: basic residues; the sequence is RSRSAKLRFAQRKPL.

It belongs to the methyltransferase superfamily. RsmH family.

The protein resides in the cytoplasm. The catalysed reaction is cytidine(1402) in 16S rRNA + S-adenosyl-L-methionine = N(4)-methylcytidine(1402) in 16S rRNA + S-adenosyl-L-homocysteine + H(+). Functionally, specifically methylates the N4 position of cytidine in position 1402 (C1402) of 16S rRNA. This chain is Ribosomal RNA small subunit methyltransferase H, found in Crocosphaera subtropica (strain ATCC 51142 / BH68) (Cyanothece sp. (strain ATCC 51142)).